We begin with the raw amino-acid sequence, 197 residues long: MEKPVTDRPSEAEVEAAVRTLLRWTGDNPDREGLIDTPKRVAKAFREMFGGYDMCPAEELGRTFEEVAGYDDLVIVKDIHFHSHCEHHMVPIIGKAHVGYLPDGKVVGLSKIARVVDIFAHRLQTQEALTAQIAGVIQDVLNPRGVAVMIEAEHMCMAMRGIRKQGSTTLTSTFTGVFKDTPEEQVRFVTMVRGGGA.

3 residues coordinate Zn(2+): Cys-85, His-88, and Cys-156.

It belongs to the GTP cyclohydrolase I family. In terms of assembly, toroid-shaped homodecamer, composed of two pentamers of five dimers.

The enzyme catalyses GTP + H2O = 7,8-dihydroneopterin 3'-triphosphate + formate + H(+). Its pathway is cofactor biosynthesis; 7,8-dihydroneopterin triphosphate biosynthesis; 7,8-dihydroneopterin triphosphate from GTP: step 1/1. The sequence is that of GTP cyclohydrolase 1 from Mesorhizobium japonicum (strain LMG 29417 / CECT 9101 / MAFF 303099) (Mesorhizobium loti (strain MAFF 303099)).